Here is a 281-residue protein sequence, read N- to C-terminus: MELNHEYGIMNTTPNIHAMIVAAGRGSRFGASIPKQYTLLQGQTLLQHSVARLAESAYIYQCLLVVAADDSTAQTLSFALPIYYAVGGAERWQSVQAGVEAMINAGADEADLVVIHDAARPAVPTHDIDAVIQAAMLEPYGAILATPVADTLKQSYIAANILSMPVHEAVLPHQHTQPELTINESDRDALHAYAQKTIDRSHMWQAQTPQVFRLGPLQQVLNYVAEHNLAITDEASAFEHLELPIRLVMGSRQNIKLTYPDDSILLTAILMAQFSSIVEIL.

The protein belongs to the IspD/TarI cytidylyltransferase family. IspD subfamily.

It catalyses the reaction 2-C-methyl-D-erythritol 4-phosphate + CTP + H(+) = 4-CDP-2-C-methyl-D-erythritol + diphosphate. Its pathway is isoprenoid biosynthesis; isopentenyl diphosphate biosynthesis via DXP pathway; isopentenyl diphosphate from 1-deoxy-D-xylulose 5-phosphate: step 2/6. In terms of biological role, catalyzes the formation of 4-diphosphocytidyl-2-C-methyl-D-erythritol from CTP and 2-C-methyl-D-erythritol 4-phosphate (MEP). The sequence is that of 2-C-methyl-D-erythritol 4-phosphate cytidylyltransferase from Psychrobacter arcticus (strain DSM 17307 / VKM B-2377 / 273-4).